Here is a 730-residue protein sequence, read N- to C-terminus: Elongation factor 2 (730 aa).

The tr-type G domain occupies 19 to 260 (EKIRNIGIVA…MVIRFLPNPL (242 aa)). Residues 28-35 (AHIDHGKT), 94-98 (DTPGH), and 148-151 (NKVD) each bind GTP. His-596 is modified (diphthamide).

This sequence belongs to the TRAFAC class translation factor GTPase superfamily. Classic translation factor GTPase family. EF-G/EF-2 subfamily.

It is found in the cytoplasm. Catalyzes the GTP-dependent ribosomal translocation step during translation elongation. During this step, the ribosome changes from the pre-translocational (PRE) to the post-translocational (POST) state as the newly formed A-site-bound peptidyl-tRNA and P-site-bound deacylated tRNA move to the P and E sites, respectively. Catalyzes the coordinated movement of the two tRNA molecules, the mRNA and conformational changes in the ribosome. This chain is Elongation factor 2 (fusA), found in Methanosarcina thermophila.